The primary structure comprises 311 residues: 4-diphosphocytidyl-2-C-methyl-D-erythritol kinase (311 aa).

The active site involves Lys16. 100–110 (PIGAGLAGGSS) lines the ATP pocket. Asp142 is an active-site residue.

The protein belongs to the GHMP kinase family. IspE subfamily.

It carries out the reaction 4-CDP-2-C-methyl-D-erythritol + ATP = 4-CDP-2-C-methyl-D-erythritol 2-phosphate + ADP + H(+). It participates in isoprenoid biosynthesis; isopentenyl diphosphate biosynthesis via DXP pathway; isopentenyl diphosphate from 1-deoxy-D-xylulose 5-phosphate: step 3/6. Its function is as follows. Catalyzes the phosphorylation of the position 2 hydroxy group of 4-diphosphocytidyl-2C-methyl-D-erythritol. In Prochlorococcus marinus (strain MIT 9312), this protein is 4-diphosphocytidyl-2-C-methyl-D-erythritol kinase.